Consider the following 89-residue polypeptide: Sec-independent protein translocase protein TatA (89 aa).

A helical transmembrane segment spans residues 1 to 21; sequence MGGISIWQLLIIAVIVVLLFG. Positions 65–89 are disordered; it reads ADKQADTNQEQAKTEDAKRHDKEQV. The span at 76 to 89 shows a compositional bias: basic and acidic residues; the sequence is AKTEDAKRHDKEQV.

The protein belongs to the TatA/E family. As to quaternary structure, the Tat system comprises two distinct complexes: a TatABC complex, containing multiple copies of TatA, TatB and TatC subunits, and a separate TatA complex, containing only TatA subunits. Substrates initially bind to the TatABC complex, which probably triggers association of the separate TatA complex to form the active translocon.

It localises to the cell inner membrane. Its function is as follows. Part of the twin-arginine translocation (Tat) system that transports large folded proteins containing a characteristic twin-arginine motif in their signal peptide across membranes. TatA could form the protein-conducting channel of the Tat system. This is Sec-independent protein translocase protein TatA from Shigella flexneri.